The primary structure comprises 408 residues: Centromere protein U (408 aa).

Positions 1 to 33 (DRPRPARLSHARFSKNHSGRTHSMKDKAGRKHR) are enriched in basic residues. The interval 1 to 218 (DRPRPARLSH…GKRKKPRSYT (218 aa)) is disordered. Thr72 is modified (phosphothreonine; by PLK1). Phosphothreonine is present on Thr92. Residues 94–103 (QEKEAKRSSD) show a composition bias toward basic and acidic residues. At Ser102 the chain carries Phosphoserine. The residue at position 104 (Thr104) is a Phosphothreonine. Phosphoserine occurs at positions 105, 110, and 114. Over residues 118 to 127 (SAKKPRRKLK) the composition is skewed to basic residues. A phosphoserine mark is found at Ser130, Ser133, and Ser135. The segment covering 176–186 (PQKTGPQSAES) has biased composition (polar residues). A Glycyl lysine isopeptide (Lys-Gly) (interchain with G-Cter in SUMO2) cross-link involves residue Lys178. Ser183 and Ser187 each carry phosphoserine. Thr192 is modified (phosphothreonine). Ser222 carries the phosphoserine modification. Residues 273–350 (SNLKEELIKM…LRKAAYFLSN (78 aa)) adopt a coiled-coil conformation. The Nuclear localization signal signature appears at 293–310 (KRKNAKIISNIEKKRQRL).

Belongs to the CENP-U/AME1 family. Component of the CENPA-NAC complex, at least composed of CENPA, CENPC, CENPH, CENPM, CENPN, CENPT and CENPU. The CENPA-NAC complex interacts with the CENPA-CAD complex, composed of CENPI, CENPK, CENPL, CENPO, CENPP, CENPQ, CENPR and CENPS. Interacts with MLF1. Post-translationally, phosphorylated by PLK1 at Thr-72, creating a self-tethering site that specifically interacts with the polo-box domain of PLK1.

The protein resides in the cytoplasm. It localises to the nucleus. The protein localises to the chromosome. It is found in the centromere. Its subcellular location is the kinetochore. In terms of biological role, component of the CENPA-NAC (nucleosome-associated) complex, a complex that plays a central role in assembly of kinetochore proteins, mitotic progression and chromosome segregation. The CENPA-NAC complex recruits the CENPA-CAD (nucleosome distal) complex and may be involved in incorporation of newly synthesized CENPA into centromeres. Plays an important role in the correct PLK1 localization to the mitotic kinetochores. A scaffold protein responsible for the initial recruitment and maintenance of the kinetochore PLK1 population until its degradation. Involved in transcriptional repression. In Bos taurus (Bovine), this protein is Centromere protein U (CENPU).